The following is a 940-amino-acid chain: Leucine--tRNA ligase, mitochondrial (940 aa).

A 'HIGH' region motif is present at residues 54 to 64 (PYPSGALHMGH). The short motif at 638–642 (TINKL) is the 'KMSKS' region element. Residue lysine 641 coordinates ATP. Residues 724-744 (KEQHQHQQQQHQQPLPSSEFN) are disordered.

It belongs to the class-I aminoacyl-tRNA synthetase family.

The protein localises to the mitochondrion. The catalysed reaction is tRNA(Leu) + L-leucine + ATP = L-leucyl-tRNA(Leu) + AMP + diphosphate. This Dictyostelium discoideum (Social amoeba) protein is Leucine--tRNA ligase, mitochondrial (mleuS).